The following is a 130-amino-acid chain: D-ribose pyranase (130 aa).

His-20 acts as the Proton donor in catalysis. Residues Asp-28, His-97, and 119–121 contribute to the substrate site; that span reads YAN.

Belongs to the RbsD / FucU family. RbsD subfamily. In terms of assembly, homodecamer.

The protein resides in the cytoplasm. It carries out the reaction beta-D-ribopyranose = beta-D-ribofuranose. Its pathway is carbohydrate metabolism; D-ribose degradation; D-ribose 5-phosphate from beta-D-ribopyranose: step 1/2. Catalyzes the interconversion of beta-pyran and beta-furan forms of D-ribose. In Bacillus pumilus (strain SAFR-032), this protein is D-ribose pyranase.